The sequence spans 264 residues: Undecaprenyl-diphosphatase (264 aa).

The next 7 membrane-spanning stretches (helical) occupy residues 38–58, 75–95, 106–126, 136–156, 181–201, 217–237, and 242–262; these read RSDFFNIVIQAGAIVAVVLVF, REYVFKLGAAFLVTAVVGLVV, VSPVAWALIIGGIWMLLVEAY, VTWTVAIGVGLAQVVAGVFPG, FVFLVGIPTMFAASAYTFLEM, VAFLAAAVTGFVVVKWLMGYI, and FTAFALYRIALGAALLLWLPS.

This sequence belongs to the UppP family.

It localises to the cell inner membrane. The catalysed reaction is di-trans,octa-cis-undecaprenyl diphosphate + H2O = di-trans,octa-cis-undecaprenyl phosphate + phosphate + H(+). In terms of biological role, catalyzes the dephosphorylation of undecaprenyl diphosphate (UPP). Confers resistance to bacitracin. In Stenotrophomonas maltophilia (strain R551-3), this protein is Undecaprenyl-diphosphatase.